The primary structure comprises 284 residues: Bifunctional protein FolD 2 (284 aa).

Residues 165–167 (GRG), Thr192, and Val233 contribute to the NADP(+) site.

This sequence belongs to the tetrahydrofolate dehydrogenase/cyclohydrolase family. Homodimer.

The enzyme catalyses (6R)-5,10-methylene-5,6,7,8-tetrahydrofolate + NADP(+) = (6R)-5,10-methenyltetrahydrofolate + NADPH. The catalysed reaction is (6R)-5,10-methenyltetrahydrofolate + H2O = (6R)-10-formyltetrahydrofolate + H(+). Its pathway is one-carbon metabolism; tetrahydrofolate interconversion. Functionally, catalyzes the oxidation of 5,10-methylenetetrahydrofolate to 5,10-methenyltetrahydrofolate and then the hydrolysis of 5,10-methenyltetrahydrofolate to 10-formyltetrahydrofolate. The protein is Bifunctional protein FolD 2 of Streptomyces avermitilis (strain ATCC 31267 / DSM 46492 / JCM 5070 / NBRC 14893 / NCIMB 12804 / NRRL 8165 / MA-4680).